Here is a 340-residue protein sequence, read N- to C-terminus: Integral membrane protein SED5 (340 aa).

The Cytoplasmic portion of the chain corresponds to 1–319 (MNIKDRTSEF…KYFDRIKSNR (319 aa)). The segment at 31-51 (RLQEKESENFANNTTGNGKSV) is disordered. A compositionally biased stretch (polar residues) spans 39–51 (NFANNTTGNGKSV). A coiled-coil region spans residues 146–173 (LNTQMKNISGSFKDVLEERQRLEMANKD). The tract at residues 180–231 (TDTGHAPADDQTQSNHAADLTTYNNSNPFMTSLLDESSEKNNNSSNQGELSF) is disordered. A compositionally biased stretch (polar residues) spans 189–209 (DQTQSNHAADLTTYNNSNPFM). Positions 249 to 311 (NVYLQERNRA…SGAQRELLKY (63 aa)) constitute a t-SNARE coiled-coil homology domain. Residues 320–340 (WLAAKVFFIIFVFFVIWVLVN) form a helical; Anchor for type IV membrane protein membrane-spanning segment.

This sequence belongs to the syntaxin family. Interacts with SLY1, STF1, SFB3 and GOS1.

Its subcellular location is the membrane. The protein localises to the golgi apparatus membrane. Its function is as follows. Required for vesicular transport between the endoplasmic reticulum and the Golgi complex. Acts as a target organelle soluble NSF attachment protein receptor (t-SNARE). This is Integral membrane protein SED5 (SED5) from Saccharomyces cerevisiae (strain ATCC 204508 / S288c) (Baker's yeast).